Here is a 722-residue protein sequence, read N- to C-terminus: Bifunctional UDP-N-acetylglucosamine 2-epimerase/N-acetylmannosamine kinase (722 aa).

The UDP site is built by arginine 19, serine 23, arginine 113, histidine 220, and asparagine 253. 4 residues coordinate CMP-N-acetyl-beta-neuraminate: lysine 259, glutamate 271, lysine 280, and histidine 281. UDP-binding residues include valine 282, serine 301, serine 302, glutamate 307, and arginine 321. An N-acetylmannosamine kinase region spans residues 406 to 722 (TLSALAVDLG…VLDYTTRRIH (317 aa)). Residue aspartate 413 participates in Mg(2+) binding. Glycine 416 serves as a coordination point for an N-acyl-D-mannosamine 6-phosphate. Threonine 417, asparagine 418, and arginine 420 together coordinate ADP. 6 residues coordinate an N-acyl-D-mannosamine 6-phosphate: glycine 476, arginine 477, threonine 489, asparagine 516, aspartate 517, and glycine 545. 5 residues coordinate an N-acyl-D-mannosamine: glycine 476, arginine 477, threonine 489, asparagine 516, and aspartate 517. The active site involves aspartate 517. Glutamate 566 and histidine 569 together coordinate an N-acyl-D-mannosamine. Histidine 569 lines the an N-acyl-D-mannosamine 6-phosphate pocket. Zn(2+)-binding residues include histidine 569, cysteine 579, cysteine 581, and cysteine 586. Residue glutamate 588 coordinates an N-acyl-D-mannosamine 6-phosphate. Residue glutamate 588 coordinates an N-acyl-D-mannosamine.

It in the N-terminal section; belongs to the UDP-N-acetylglucosamine 2-epimerase family. This sequence in the C-terminal section; belongs to the ROK (NagC/XylR) family. As to quaternary structure, homodimer. Homotetramer. Homohexamer. The hexameric form exhibits both enzyme activities, whereas the dimeric form only catalyzes the phosphorylation of N-acyl-D-mannosamine. In terms of processing, phosphorylated. Phosphorylation by PKC activates the UDP-N-acetylglucosamine 2-epimerase activity.

Its subcellular location is the cytoplasm. The protein localises to the cytosol. The enzyme catalyses UDP-N-acetyl-alpha-D-glucosamine + H2O = aldehydo-N-acetyl-D-mannosamine + UDP + H(+). The catalysed reaction is an N-acyl-D-mannosamine + ATP = an N-acyl-D-mannosamine 6-phosphate + ADP + H(+). It participates in amino-sugar metabolism; N-acetylneuraminate biosynthesis. Its activity is regulated as follows. The UDP-N-acetylglucosamine 2-epimerase activity, in contrast to the N-acetylmannosamine kinase activity, exhibits allosteric regulation by cytidine monophosphate-N-acetylneuraminic acid (CMP-Neu5Ac), the end product of neuraminic acid biosynthesis. Moreover, the activity is contingent upon the oligomeric state of the enzyme. The monomeric form is inactive, while the dimeric form selectively catalyzes the phosphorylation of N-acetylmannosamine. The hexameric form, on the other hand, demonstrates full proficiency in both enzyme activities. Furthermore, the UDP-N-acetylglucosamine 2-epimerase activity is increased by PKC-mediated phosphorylation. Its function is as follows. Bifunctional enzyme that possesses both UDP-N-acetylglucosamine 2-epimerase and N-acetylmannosamine kinase activities, and serves as the initiator of the biosynthetic pathway leading to the production of N-acetylneuraminic acid (NeuAc), a critical precursor in the synthesis of sialic acids. By catalyzing this pivotal and rate-limiting step in sialic acid biosynthesis, this enzyme assumes a pivotal role in governing the regulation of cell surface sialylation, playing a role in embryonic angiogenesis. Sialic acids represent a category of negatively charged sugars that reside on the surface of cells as terminal components of glycoconjugates and mediate important functions in various cellular processes, including cell adhesion, signal transduction, and cellular recognition. The chain is Bifunctional UDP-N-acetylglucosamine 2-epimerase/N-acetylmannosamine kinase (GNE) from Cricetulus griseus (Chinese hamster).